The sequence spans 314 residues: 3'-5' exoribonuclease YhaM (314 aa).

An HD domain is found at 163–279; sequence HVVSMLDLAK…LHYIDNLDAK (117 aa).

It belongs to the YhaM family.

In terms of biological role, shows a 3'-5' exoribonuclease activity. The chain is 3'-5' exoribonuclease YhaM from Bacillus cereus (strain G9842).